The chain runs to 368 residues: Ubiquitin domain-containing protein UBFD1 (368 aa).

A disordered region spans residues 106 to 139; that stretch reads SCDARGNLQPAPAQPPGDPAAQASVSNGEDAGGG. One can recognise a Ubiquitin-like domain in the interval 143 to 218; that stretch reads ELVDLKIIWN…IMVVGSTIND (76 aa). Positions 231–263 are disordered; it reads QDAKAEENKKEPLCRQKQHRKVLDKGKPEDVMP. Basic and acidic residues-rich tracts occupy residues 233–244 and 251–260; these read AKAEENKKEPLC and KVLDKGKPED.

The protein is Ubiquitin domain-containing protein UBFD1 (Ubfd1) of Mus musculus (Mouse).